Here is a 379-residue protein sequence, read N- to C-terminus: MFTIITGAQFGDEGKGKIVDLLAKDYDVVARFQGGNNAGHTVKVGDEVYKLHLIPSGILLDARVLIGPGVVLNPEVLAEEIEMFEKHGVKVNSEKLGVDAKTSIIMPYHIELDGLREASRETKIGTTKRGIGYAYIDKVARDEIRMAELVDKERFLARLEELAPQKEKEIEAMGGDPRIVRDPELIKRYLELGEQFAAYITDVSREINQALDEGKNVMAEAAQGTHLDVIHGTQKFVTSSSTIAGSACANLGVGPTRVDNVIAIVKAYITRVGEGPLPTELIGELGERIQKAGGEFGTTTGRGRRCGWFDLPLLKKAIALNGYTEISLTKLDVLTGLDPLRSAQVMSIKGKNWTILRNLRKTSRHAALCMKTCQDGKKN.

Residues 11–17 and 39–41 each bind GTP; these read GDEGKGK and GHT. Aspartate 12 acts as the Proton acceptor in catalysis. Positions 12 and 39 each coordinate Mg(2+). IMP is bound by residues 12–15, 37–40, threonine 127, arginine 141, glutamine 223, threonine 238, and arginine 302; these read DEGK and NAGH. Histidine 40 (proton donor) is an active-site residue. Residue 298–304 participates in substrate binding; it reads TTTGRGR. Residues arginine 304 and 330-332 contribute to the GTP site; that span reads KLD.

Belongs to the adenylosuccinate synthetase family. In terms of assembly, homodimer. Mg(2+) serves as cofactor.

The protein resides in the cytoplasm. The enzyme catalyses IMP + L-aspartate + GTP = N(6)-(1,2-dicarboxyethyl)-AMP + GDP + phosphate + 2 H(+). Its pathway is purine metabolism; AMP biosynthesis via de novo pathway; AMP from IMP: step 1/2. In terms of biological role, plays an important role in the de novo pathway of purine nucleotide biosynthesis. Catalyzes the first committed step in the biosynthesis of AMP from IMP. This Methanosarcina mazei (strain ATCC BAA-159 / DSM 3647 / Goe1 / Go1 / JCM 11833 / OCM 88) (Methanosarcina frisia) protein is Adenylosuccinate synthetase.